We begin with the raw amino-acid sequence, 345 residues long: N-acetyl-gamma-glutamyl-phosphate reductase (345 aa).

Cysteine 149 is a catalytic residue.

This sequence belongs to the NAGSA dehydrogenase family. Type 1 subfamily.

It localises to the cytoplasm. It carries out the reaction N-acetyl-L-glutamate 5-semialdehyde + phosphate + NADP(+) = N-acetyl-L-glutamyl 5-phosphate + NADPH + H(+). It functions in the pathway amino-acid biosynthesis; L-arginine biosynthesis; N(2)-acetyl-L-ornithine from L-glutamate: step 3/4. Functionally, catalyzes the NADPH-dependent reduction of N-acetyl-5-glutamyl phosphate to yield N-acetyl-L-glutamate 5-semialdehyde. The protein is N-acetyl-gamma-glutamyl-phosphate reductase of Bacillus thuringiensis subsp. konkukian (strain 97-27).